The following is an 893-amino-acid chain: Protein translocase subunit SecA (893 aa).

ATP-binding positions include Gln87, 105 to 109 (GEGKT), and Asp512. Residues 840-849 (VEEQHRKSEE) show a composition bias toward basic and acidic residues. Positions 840 to 893 (VEEQHRKSEEVPMDFQHQSASSPSEQAQTPRVGRNEPCPCGSGKKYKQCHGKLA) are disordered. Positions 855–868 (QHQSASSPSEQAQT) are enriched in polar residues. Zn(2+) is bound by residues Cys877, Cys879, Cys888, and His889. Positions 883–893 (KKYKQCHGKLA) are enriched in basic residues.

This sequence belongs to the SecA family. In terms of assembly, monomer and homodimer. Part of the essential Sec protein translocation apparatus which comprises SecA, SecYEG and auxiliary proteins SecDF-YajC and YidC. Zn(2+) is required as a cofactor.

It localises to the cell inner membrane. Its subcellular location is the cytoplasm. It carries out the reaction ATP + H2O + cellular proteinSide 1 = ADP + phosphate + cellular proteinSide 2.. Its function is as follows. Part of the Sec protein translocase complex. Interacts with the SecYEG preprotein conducting channel. Has a central role in coupling the hydrolysis of ATP to the transfer of proteins into and across the cell membrane, serving both as a receptor for the preprotein-SecB complex and as an ATP-driven molecular motor driving the stepwise translocation of polypeptide chains across the membrane. The protein is Protein translocase subunit SecA of Colwellia psychrerythraea (strain 34H / ATCC BAA-681) (Vibrio psychroerythus).